The sequence spans 477 residues: Ribulose bisphosphate carboxylase large chain (477 aa).

Positions 1–2 (MS) are excised as a propeptide. At Pro-3 the chain carries N-acetylproline. Lys-14 carries the post-translational modification N6,N6,N6-trimethyllysine. Substrate-binding residues include Asn-123 and Thr-173. Lys-175 (proton acceptor) is an active-site residue. Lys-177 provides a ligand contact to substrate. Mg(2+) contacts are provided by Lys-201, Asp-203, and Glu-204. The residue at position 201 (Lys-201) is an N6-carboxylysine. The active-site Proton acceptor is His-294. Residues Arg-295, His-327, and Ser-379 each coordinate substrate.

It belongs to the RuBisCO large chain family. Type I subfamily. In terms of assembly, heterohexadecamer of 8 large chains and 8 small chains; disulfide-linked. The disulfide link is formed within the large subunit homodimers. Requires Mg(2+) as cofactor. The disulfide bond which can form in the large chain dimeric partners within the hexadecamer appears to be associated with oxidative stress and protein turnover.

The protein resides in the plastid. It localises to the chloroplast. It carries out the reaction 2 (2R)-3-phosphoglycerate + 2 H(+) = D-ribulose 1,5-bisphosphate + CO2 + H2O. The catalysed reaction is D-ribulose 1,5-bisphosphate + O2 = 2-phosphoglycolate + (2R)-3-phosphoglycerate + 2 H(+). In terms of biological role, ruBisCO catalyzes two reactions: the carboxylation of D-ribulose 1,5-bisphosphate, the primary event in carbon dioxide fixation, as well as the oxidative fragmentation of the pentose substrate in the photorespiration process. Both reactions occur simultaneously and in competition at the same active site. The chain is Ribulose bisphosphate carboxylase large chain from Cichorium intybus (Chicory).